Consider the following 56-residue polypeptide: uncharacterized protein (56 aa).

The next 2 helical transmembrane spans lie at Val-6–Gly-26 and Val-29–Val-49.

It is found in the cell membrane. This is an uncharacterized protein from Bacillus subtilis (strain 168).